A 688-amino-acid chain; its full sequence is DNA ligase (688 aa).

NAD(+)-binding positions include 51–55, 100–101, and Glu-129; these read DSEYD and SL. Lys-131 (N6-AMP-lysine intermediate) is an active-site residue. Arg-152, Glu-189, Lys-308, and Lys-332 together coordinate NAD(+). 4 residues coordinate Zn(2+): Cys-426, Cys-429, Cys-444, and Cys-450. Residues 609–688 form the BRCT domain; sequence ADEQPLKGQT…DELLALLANS (80 aa).

Belongs to the NAD-dependent DNA ligase family. LigA subfamily. It depends on Mg(2+) as a cofactor. The cofactor is Mn(2+).

The enzyme catalyses NAD(+) + (deoxyribonucleotide)n-3'-hydroxyl + 5'-phospho-(deoxyribonucleotide)m = (deoxyribonucleotide)n+m + AMP + beta-nicotinamide D-nucleotide.. Its function is as follows. DNA ligase that catalyzes the formation of phosphodiester linkages between 5'-phosphoryl and 3'-hydroxyl groups in double-stranded DNA using NAD as a coenzyme and as the energy source for the reaction. It is essential for DNA replication and repair of damaged DNA. This chain is DNA ligase, found in Shewanella sp. (strain MR-7).